Consider the following 399-residue polypeptide: Interferon regulatory factor 9 (399 aa).

Residues 9 to 116 (TRKLRSWIVE…EPYKVYRILP (108 aa)) constitute a DNA-binding region (IRF tryptophan pentad repeat). The tract at residues 118-189 (GTLPNQPRNQ…CNSELEEGAG (72 aa)) is disordered. Over residues 120–129 (LPNQPRNQKS) the composition is skewed to polar residues. Ser-139 bears the Phosphoserine mark. Residues 148–157 (NGRTNGVVNH) show a composition bias toward polar residues. The span at 171-189 (SNRSDSNSNCNSELEEGAG) shows a compositional bias: low complexity. Ser-393 bears the Phosphoserine mark.

Belongs to the IRF family. In terms of assembly, interacts with STAT2 in the cytoplasm. Forms the interferon-stimulated gene factor 3 complex (ISGF3) with the heterodimer STAT1:STAT2; upon stimulation.

It is found in the nucleus. Transcription factor that plays an essential role in anti-viral immunity. It mediates signaling by type I IFNs (IFN-alpha and IFN-beta). Following type I IFN binding to cell surface receptors, Jak kinases (TYK2 and JAK1) are activated, leading to tyrosine phosphorylation of STAT1 and STAT2. IRF9/ISGF3G associates with the phosphorylated STAT1:STAT2 dimer to form a complex termed ISGF3 transcription factor, that enters the nucleus. ISGF3 binds to the IFN stimulated response element (ISRE) to activate the transcription of interferon stimulated genes, which drive the cell in an antiviral state. The chain is Interferon regulatory factor 9 (Irf9) from Mus musculus (Mouse).